Here is a 271-residue protein sequence, read N- to C-terminus: Formamidopyrimidine-DNA glycosylase (271 aa).

Pro2 serves as the catalytic Schiff-base intermediate with DNA. Glu3 functions as the Proton donor in the catalytic mechanism. The Proton donor; for beta-elimination activity role is filled by Lys58. The DNA site is built by His92, Arg111, and Arg152. Residues Thr237–Arg271 form an FPG-type zinc finger. Arg261 (proton donor; for delta-elimination activity) is an active-site residue.

This sequence belongs to the FPG family. As to quaternary structure, monomer. Zn(2+) is required as a cofactor.

The catalysed reaction is Hydrolysis of DNA containing ring-opened 7-methylguanine residues, releasing 2,6-diamino-4-hydroxy-5-(N-methyl)formamidopyrimidine.. It carries out the reaction 2'-deoxyribonucleotide-(2'-deoxyribose 5'-phosphate)-2'-deoxyribonucleotide-DNA = a 3'-end 2'-deoxyribonucleotide-(2,3-dehydro-2,3-deoxyribose 5'-phosphate)-DNA + a 5'-end 5'-phospho-2'-deoxyribonucleoside-DNA + H(+). In terms of biological role, involved in base excision repair of DNA damaged by oxidation or by mutagenic agents. Acts as a DNA glycosylase that recognizes and removes damaged bases. Has a preference for oxidized purines, such as 7,8-dihydro-8-oxoguanine (8-oxoG). Has AP (apurinic/apyrimidinic) lyase activity and introduces nicks in the DNA strand. Cleaves the DNA backbone by beta-delta elimination to generate a single-strand break at the site of the removed base with both 3'- and 5'-phosphates. The sequence is that of Formamidopyrimidine-DNA glycosylase from Xanthomonas oryzae pv. oryzae (strain MAFF 311018).